A 148-amino-acid chain; its full sequence is uncharacterized protein (148 aa).

Residues Cys21, Cys24, Cys88, and Cys117 each coordinate [4Fe-4S] cluster.

The protein belongs to the complex I 20 kDa subunit family. Requires [4Fe-4S] cluster as cofactor.

This is an uncharacterized protein from Methanocaldococcus jannaschii (strain ATCC 43067 / DSM 2661 / JAL-1 / JCM 10045 / NBRC 100440) (Methanococcus jannaschii).